Consider the following 968-residue polypeptide: A disintegrin and metalloproteinase with thrombospondin motifs 1 (968 aa).

Disordered stretches follow at residues 1 to 23 (MQPKVPLGSRKQKPCSDMGDVQR) and 177 to 253 (APAV…RKKR). The signal sequence occupies residues 1–48 (MQPKVPLGSRKQKPCSDMGDVQRAARSRGSLSAHMLLLLLASITMLLC). A propeptide spanning residues 49-253 (ARGAHGRPTE…SGPGSIRKKR (205 aa)) is cleaved from the precursor. The Cysteine switch signature appears at 204 to 211 (AKCGVMDD). Residue cysteine 206 coordinates Zn(2+). Over residues 214–229 (LPTSDSRPESQNTRNQ) the composition is skewed to polar residues. Positions 259–468 (RYVETMLVAD…GHGECLMDKP (210 aa)) constitute a Peptidase M12B domain. Positions 262, 345, and 352 each coordinate Ca(2+). 4 disulfide bridges follow: cysteine 334-cysteine 386, cysteine 363-cysteine 368, cysteine 380-cysteine 463, and cysteine 418-cysteine 447. Histidine 402 lines the Zn(2+) pocket. Residue glutamate 403 is part of the active site. Positions 406 and 412 each coordinate Zn(2+). Positions 463 and 466 each coordinate Ca(2+). Positions 477–559 (DLPGTLYDAN…TDMKHFATPV (83 aa)) constitute a Disintegrin domain. 4 disulfide bridges follow: cysteine 489-cysteine 512, cysteine 500-cysteine 522, cysteine 507-cysteine 541, and cysteine 535-cysteine 546. An N-linked (GlcNAc...) asparagine glycan is attached at asparagine 548. The TSP type-1 1 domain occupies 560–615 (HGSWGPWGPWGDCSRTCGGGVQYTMRECDNPVPKNGGKYCEGKRVRYRSCNIEDCP). 3 disulfides stabilise this stretch: cysteine 572–cysteine 609, cysteine 576–cysteine 614, and cysteine 587–cysteine 599. 3 N-linked (GlcNAc...) asparagine glycosylation sites follow: asparagine 721, asparagine 765, and asparagine 783. The spacer stretch occupies residues 726–850 (KKMSGIVTST…YFMKKKTESF (125 aa)). 2 consecutive TSP type-1 domains span residues 855–911 (TFSE…LPCP) and 912–968 (HWQV…TQCS). Asparagine 946 is a glycosylation site (N-linked (GlcNAc...) asparagine).

Zn(2+) is required as a cofactor. Post-translationally, the precursor is cleaved by a furin endopeptidase. In terms of processing, glycosylated. Can be O-fucosylated by POFUT2 on a serine or a threonine residue found within the consensus sequence C1-X(2)-(S/T)-C2-G of the TSP type-1 repeat domains where C1 and C2 are the first and second cysteine residue of the repeat, respectively. Fucosylated repeats can then be further glycosylated by the addition of a beta-1,3-glucose residue by the glucosyltransferase, B3GALTL. Fucosylation mediates the efficient secretion of ADAMTS family members. Can also be C-glycosylated with one or two mannose molecules on tryptophan residues within the consensus sequence W-X-X-W of the TPRs, and N-glycosylated. These other glycosylations can also facilitate secretion.

The protein resides in the secreted. The protein localises to the extracellular space. Its subcellular location is the extracellular matrix. Metalloprotease which cleaves aggrecan, a cartilage proteoglycan, at the '1691-Glu-|-Leu-1692' site (within the chondroitin sulfate attachment domain), and may be involved in its turnover. Also cleaves COMP. Has angiogenic inhibitor activity. May play a critical role in follicular rupture. The chain is A disintegrin and metalloproteinase with thrombospondin motifs 1 (Adamts1) from Mus musculus (Mouse).